Consider the following 362-residue polypeptide: Dihydroorotate dehydrogenase (quinone) (362 aa).

FMN contacts are provided by residues 62–66 (AGYDK) and T86. K66 is a substrate binding site. Residue 111–115 (NRLGF) participates in substrate binding. FMN-binding residues include N139 and N170. N170 serves as a coordination point for substrate. The Nucleophile role is filled by S173. N175 contributes to the substrate binding site. The FMN site is built by K215 and S243. 244 to 245 (NT) contributes to the substrate binding site. Residues G266, G295, and 316–317 (YS) each bind FMN.

This sequence belongs to the dihydroorotate dehydrogenase family. Type 2 subfamily. In terms of assembly, monomer. It depends on FMN as a cofactor.

Its subcellular location is the cell membrane. It catalyses the reaction (S)-dihydroorotate + a quinone = orotate + a quinol. It participates in pyrimidine metabolism; UMP biosynthesis via de novo pathway; orotate from (S)-dihydroorotate (quinone route): step 1/1. Functionally, catalyzes the conversion of dihydroorotate to orotate with quinone as electron acceptor. In Rhizobium etli (strain ATCC 51251 / DSM 11541 / JCM 21823 / NBRC 15573 / CFN 42), this protein is Dihydroorotate dehydrogenase (quinone).